Here is a 269-residue protein sequence, read N- to C-terminus: Tryptophan synthase alpha chain (269 aa).

Active-site proton acceptor residues include E49 and D60.

It belongs to the TrpA family. Tetramer of two alpha and two beta chains.

It catalyses the reaction (1S,2R)-1-C-(indol-3-yl)glycerol 3-phosphate + L-serine = D-glyceraldehyde 3-phosphate + L-tryptophan + H2O. It functions in the pathway amino-acid biosynthesis; L-tryptophan biosynthesis; L-tryptophan from chorismate: step 5/5. Its function is as follows. The alpha subunit is responsible for the aldol cleavage of indoleglycerol phosphate to indole and glyceraldehyde 3-phosphate. The polypeptide is Tryptophan synthase alpha chain (Proteus mirabilis (strain HI4320)).